Reading from the N-terminus, the 306-residue chain is UDP-N-acetylenolpyruvoylglucosamine reductase (306 aa).

The FAD-binding PCMH-type domain occupies 30 to 216 (RIGGPVPYIL…KSKLIDFSTR (187 aa)). Residue Arg180 is part of the active site. The active-site Proton donor is the Ser230. Glu301 is a catalytic residue.

It belongs to the MurB family. It depends on FAD as a cofactor.

The protein localises to the cytoplasm. It catalyses the reaction UDP-N-acetyl-alpha-D-muramate + NADP(+) = UDP-N-acetyl-3-O-(1-carboxyvinyl)-alpha-D-glucosamine + NADPH + H(+). It participates in cell wall biogenesis; peptidoglycan biosynthesis. Cell wall formation. This is UDP-N-acetylenolpyruvoylglucosamine reductase from Petrotoga mobilis (strain DSM 10674 / SJ95).